Reading from the N-terminus, the 312-residue chain is Light-independent protochlorophyllide reductase iron-sulfur ATP-binding protein (312 aa).

ATP-binding positions include 55–60 (GIGKST) and Lys-84. Residue Ser-59 coordinates Mg(2+). [4Fe-4S] cluster-binding residues include Cys-140 and Cys-174. Residues 225 to 226 (NR) and 249 to 251 (PDL) contribute to the ATP site.

This sequence belongs to the NifH/BchL/ChlL family. In terms of assembly, homodimer. Protochlorophyllide reductase is composed of three subunits; BchL, BchN and BchB. It depends on [4Fe-4S] cluster as a cofactor.

The enzyme catalyses chlorophyllide a + oxidized 2[4Fe-4S]-[ferredoxin] + 2 ADP + 2 phosphate = protochlorophyllide a + reduced 2[4Fe-4S]-[ferredoxin] + 2 ATP + 2 H2O. Its pathway is porphyrin-containing compound metabolism; bacteriochlorophyll biosynthesis (light-independent). In terms of biological role, component of the dark-operative protochlorophyllide reductase (DPOR) that uses Mg-ATP and reduced ferredoxin to reduce ring D of protochlorophyllide (Pchlide) to form chlorophyllide a (Chlide). This reaction is light-independent. The L component serves as a unique electron donor to the NB-component of the complex, and binds Mg-ATP. In Rhodopseudomonas palustris (strain ATCC BAA-98 / CGA009), this protein is Light-independent protochlorophyllide reductase iron-sulfur ATP-binding protein.